Reading from the N-terminus, the 142-residue chain is Large ribosomal subunit protein bL17 (142 aa).

Belongs to the bacterial ribosomal protein bL17 family. In terms of assembly, part of the 50S ribosomal subunit. Contacts protein L32.

This Wolbachia sp. subsp. Brugia malayi (strain TRS) protein is Large ribosomal subunit protein bL17.